We begin with the raw amino-acid sequence, 146 residues long: Transcriptional regulator MraZ (146 aa).

SpoVT-AbrB domains are found at residues 7-54 (NATN…GLDL) and 83-126 (GVFV…QPEA).

It belongs to the MraZ family. In terms of assembly, forms oligomers.

The protein resides in the cytoplasm. Its subcellular location is the nucleoid. The chain is Transcriptional regulator MraZ from Rhizobium rhizogenes (strain K84 / ATCC BAA-868) (Agrobacterium radiobacter).